The chain runs to 606 residues: Vitamin B12 transporter BtuB (606 aa).

An N-terminal signal peptide occupies residues 1–21 (MKKTLLAVALAPLCLPSQVFA). A TonB box motif is present at residues 28-35 (DVMVVTAN). Residues 40–152 (PIKNVIAPIS…IGGVLNIITA (113 aa)) form the TBDR plug domain. One can recognise a TBDR beta-barrel domain in the interval 157 to 606 (ESVAEVTAGG…SYYATATYKF (450 aa)). The TonB C-terminal box signature appears at 589 to 606 (ETYNVQERSYYATATYKF).

It belongs to the TonB-dependent receptor family. BtuB (TC 1.B.14.3.1) subfamily.

The protein localises to the cell outer membrane. In terms of biological role, involved in the active translocation of vitamin B12 (cyanocobalamin) across the outer membrane to the periplasmic space. It derives its energy for transport by interacting with the trans-periplasmic membrane protein TonB. The chain is Vitamin B12 transporter BtuB from Photobacterium profundum (strain SS9).